The chain runs to 703 residues: WD repeat-containing protein pop2 (703 aa).

Polar residues-rich tracts occupy residues Met-1–Pro-27, Glu-63–Ser-73, and Ser-156–Pro-178. Disordered regions lie at residues Met-1–Ser-73 and Ser-156–Ser-180. Residues Met-1–Val-170 form an interaction with pop1 region. Residues Lys-236–Met-283 form the F-box domain. 6 WD repeats span residues Gly-389–Asn-417, Gly-429–Lys-473, Gly-505–Arg-533, Gly-545–Asp-575, Gly-587–Asp-615, and Leu-625–Asp-654.

In terms of assembly, homodimer and heterodimer with pop1. Binds to cul1, pip1 and phosphorylated cdc18.

It is found in the cytoplasm. The protein resides in the nucleus. In terms of biological role, involved in maintenance of ploidy through proteasome dependent degradation of CDK inhibitor rum1 and S-phase initiator cdc18. Functions as a recognition factor for rum1 and cdc18, which are subsequently ubiquitinated and targeted to the 26S proteasome for degradation. Together with pop1, required for cig2 instability during G2 and M phase and cig2 degradation in exponentially growing cells. The sequence is that of WD repeat-containing protein pop2 (pop2) from Schizosaccharomyces pombe (strain 972 / ATCC 24843) (Fission yeast).